Consider the following 244-residue polypeptide: DnaJ homolog subfamily C member 4 (244 aa).

The J domain maps to 37-102 (NYYELLGVHP…ESRRNYDHQL (66 aa)). Positions 96 to 127 (RNYDHQLHSASPPKSSGSTAEPKYTQQTHSSW) are disordered. Over residues 103–127 (HSASPPKSSGSTAEPKYTQQTHSSW) the composition is skewed to polar residues. A helical membrane pass occupies residues 159–178 (VLGYCLLLMVAGMGLHYVAF). Residues 208–244 (RANRARIQQERQQRQQPRAEPSLPPESSRIMPQDTSP) form a disordered region.

The protein localises to the membrane. This chain is DnaJ homolog subfamily C member 4 (Dnajc4), found in Mus musculus (Mouse).